The following is a 111-amino-acid chain: Cytochrome c (111 aa).

At Ser-1 the chain carries N-acetylserine. Heme c-binding residues include Cys-22, Cys-25, and His-26. Position 80 is an N6,N6,N6-trimethyllysine (Lys-80). Met-88 provides a ligand contact to heme c.

It belongs to the cytochrome c family. Post-translationally, binds 1 heme c group covalently per subunit.

The protein resides in the mitochondrion intermembrane space. Electron carrier protein. The oxidized form of the cytochrome c heme group can accept an electron from the heme group of the cytochrome c1 subunit of cytochrome reductase. Cytochrome c then transfers this electron to the cytochrome oxidase complex, the final protein carrier in the mitochondrial electron-transport chain. This chain is Cytochrome c, found in Ulva intestinalis (Hollow green nori).